Here is a 300-residue protein sequence, read N- to C-terminus: UDP-N-acetylenolpyruvoylglucosamine reductase (300 aa).

The 169-residue stretch at 22 to 190 (RVGGAAEWLA…LSARFRLQPG (169 aa)) folds into the FAD-binding PCMH-type domain. Residue arginine 169 is part of the active site. Serine 220 serves as the catalytic Proton donor. Residue glutamate 290 is part of the active site.

This sequence belongs to the MurB family. FAD serves as cofactor.

The protein localises to the cytoplasm. The enzyme catalyses UDP-N-acetyl-alpha-D-muramate + NADP(+) = UDP-N-acetyl-3-O-(1-carboxyvinyl)-alpha-D-glucosamine + NADPH + H(+). It functions in the pathway cell wall biogenesis; peptidoglycan biosynthesis. In terms of biological role, cell wall formation. The protein is UDP-N-acetylenolpyruvoylglucosamine reductase of Synechococcus sp. (strain CC9605).